Here is a 425-residue protein sequence, read N- to C-terminus: Serine hydroxymethyltransferase (425 aa).

(6S)-5,6,7,8-tetrahydrofolate is bound by residues Leu-128 and 132–134 (GHL). Lys-237 carries the post-translational modification N6-(pyridoxal phosphate)lysine.

The protein belongs to the SHMT family. As to quaternary structure, homodimer. The cofactor is pyridoxal 5'-phosphate.

The protein localises to the cytoplasm. The enzyme catalyses (6R)-5,10-methylene-5,6,7,8-tetrahydrofolate + glycine + H2O = (6S)-5,6,7,8-tetrahydrofolate + L-serine. Its pathway is one-carbon metabolism; tetrahydrofolate interconversion. It participates in amino-acid biosynthesis; glycine biosynthesis; glycine from L-serine: step 1/1. Functionally, catalyzes the reversible interconversion of serine and glycine with tetrahydrofolate (THF) serving as the one-carbon carrier. This reaction serves as the major source of one-carbon groups required for the biosynthesis of purines, thymidylate, methionine, and other important biomolecules. Also exhibits THF-independent aldolase activity toward beta-hydroxyamino acids, producing glycine and aldehydes, via a retro-aldol mechanism. The chain is Serine hydroxymethyltransferase from Wolbachia sp. subsp. Drosophila simulans (strain wRi).